A 276-amino-acid chain; its full sequence is Cis-2,3-dihydrobiphenyl-2,3-diol dehydrogenase (276 aa).

Leu9–Ala33 contributes to the NAD(+) binding site. Ser142 is a substrate binding site. Tyr155 acts as the Proton acceptor in catalysis.

Belongs to the short-chain dehydrogenases/reductases (SDR) family.

It carries out the reaction (2R,3S)-3-phenylcyclohexa-3,5-diene-1,2-diol + NAD(+) = biphenyl-2,3-diol + NADH + H(+). Its pathway is xenobiotic degradation; biphenyl degradation; 2-hydroxy-2,4-pentadienoate and benzoate from biphenyl: step 2/4. In Pseudomonas sp. (strain KKS102), this protein is Cis-2,3-dihydrobiphenyl-2,3-diol dehydrogenase (bphB).